The chain runs to 276 residues: MRTVSTVAELRAALPREGVGFVPTMGYLHRGHLALVERARRENPFVVVSVFVNPLQFGPGEDYHRYPRDLERDRALLQEAGVDLLFAPGVEEMYPEGFATRVQVEGPLTALWEGAVRPGHFQGVATVVARLFLLVQPQRAYFGEKDYQQLLVVRRMVRDLGFPVEVVGVPTVREEDGLALSSRNVYLSPETRKKAPVLYRALLAMREVAGQGGSVAEALRAGEEALRAVPEFRKDYLAIVHPETLLPLSDWVAGARGIVAGRFPEARLIDNLEVYP.

25–32 (MGYLHRGH) provides a ligand contact to ATP. Residue histidine 32 is the Proton donor of the active site. Position 56 (glutamine 56) interacts with (R)-pantoate. Glutamine 56 provides a ligand contact to beta-alanine. An ATP-binding site is contributed by 143 to 146 (GEKD). Glutamine 149 lines the (R)-pantoate pocket. ATP-binding positions include valine 172 and 180-183 (LSSR).

This sequence belongs to the pantothenate synthetase family. As to quaternary structure, homodimer.

The protein localises to the cytoplasm. The catalysed reaction is (R)-pantoate + beta-alanine + ATP = (R)-pantothenate + AMP + diphosphate + H(+). Its pathway is cofactor biosynthesis; (R)-pantothenate biosynthesis; (R)-pantothenate from (R)-pantoate and beta-alanine: step 1/1. In terms of biological role, catalyzes the condensation of pantoate with beta-alanine in an ATP-dependent reaction via a pantoyl-adenylate intermediate. This Thermus thermophilus (strain ATCC BAA-163 / DSM 7039 / HB27) protein is Pantothenate synthetase.